Reading from the N-terminus, the 182-residue chain is Protein transport protein gos1 (182 aa).

The Cytoplasmic portion of the chain corresponds to 1–163 (MKSMLLRDSV…RKTSIRRRRD (163 aa)). The helical; Anchor for type IV membrane protein transmembrane segment at 164–181 (SIILALLISVLMLLFLFF) threads the bilayer. Histidine 182 is a topological domain (vesicular).

This sequence belongs to the GOSR1 family. As to quaternary structure, component of a SNARE complex consisting of sed5, gos1, ykt6, and sft1.

Its subcellular location is the golgi apparatus membrane. Nonessential SNARE involved in retrograde transport within the Golgi complex. This chain is Protein transport protein gos1 (gos1), found in Schizosaccharomyces pombe (strain 972 / ATCC 24843) (Fission yeast).